The following is a 129-amino-acid chain: Small ribosomal subunit protein uS8 (129 aa).

This sequence belongs to the universal ribosomal protein uS8 family. As to quaternary structure, part of the 30S ribosomal subunit. Contacts proteins S5 and S12.

Functionally, one of the primary rRNA binding proteins, it binds directly to 16S rRNA central domain where it helps coordinate assembly of the platform of the 30S subunit. The polypeptide is Small ribosomal subunit protein uS8 (Mycoplasma mycoides subsp. mycoides SC (strain CCUG 32753 / NCTC 10114 / PG1)).